Reading from the N-terminus, the 291-residue chain is Acetyl-coenzyme A carboxylase carboxyl transferase subunit beta (291 aa).

The 269-residue stretch at 23 to 291 (VYTKDPVSGE…TPASASVAKS (269 aa)) folds into the CoA carboxyltransferase N-terminal domain.

Belongs to the AccD/PCCB family. Acetyl-CoA carboxylase is a heterohexamer composed of biotin carboxyl carrier protein (AccB), biotin carboxylase (AccC) and two subunits each of ACCase subunit alpha (AccA) and ACCase subunit beta (AccD).

Its subcellular location is the cytoplasm. The enzyme catalyses N(6)-carboxybiotinyl-L-lysyl-[protein] + acetyl-CoA = N(6)-biotinyl-L-lysyl-[protein] + malonyl-CoA. Its pathway is lipid metabolism; malonyl-CoA biosynthesis; malonyl-CoA from acetyl-CoA: step 1/1. Functionally, component of the acetyl coenzyme A carboxylase (ACC) complex. Biotin carboxylase (BC) catalyzes the carboxylation of biotin on its carrier protein (BCCP) and then the CO(2) group is transferred by the transcarboxylase to acetyl-CoA to form malonyl-CoA. The sequence is that of Acetyl-coenzyme A carboxylase carboxyl transferase subunit beta from Opitutus terrae (strain DSM 11246 / JCM 15787 / PB90-1).